The sequence spans 1373 residues: DNA-directed RNA polymerase subunit beta (1373 aa).

Belongs to the RNA polymerase beta chain family. As to quaternary structure, the RNAP catalytic core consists of 2 alpha, 1 beta, 1 beta' and 1 omega subunit. When a sigma factor is associated with the core the holoenzyme is formed, which can initiate transcription.

It carries out the reaction RNA(n) + a ribonucleoside 5'-triphosphate = RNA(n+1) + diphosphate. In terms of biological role, DNA-dependent RNA polymerase catalyzes the transcription of DNA into RNA using the four ribonucleoside triphosphates as substrates. This chain is DNA-directed RNA polymerase subunit beta, found in Rickettsia felis (strain ATCC VR-1525 / URRWXCal2) (Rickettsia azadi).